We begin with the raw amino-acid sequence, 434 residues long: Serine--tRNA ligase (434 aa).

241 to 243 (TAE) is an L-serine binding site. 272 to 274 (RSE) provides a ligand contact to ATP. Glutamate 295 provides a ligand contact to L-serine. 359–362 (EISS) is a binding site for ATP. Serine 395 provides a ligand contact to L-serine.

Belongs to the class-II aminoacyl-tRNA synthetase family. Type-1 seryl-tRNA synthetase subfamily. As to quaternary structure, homodimer. The tRNA molecule binds across the dimer.

It is found in the cytoplasm. The enzyme catalyses tRNA(Ser) + L-serine + ATP = L-seryl-tRNA(Ser) + AMP + diphosphate + H(+). The catalysed reaction is tRNA(Sec) + L-serine + ATP = L-seryl-tRNA(Sec) + AMP + diphosphate + H(+). The protein operates within aminoacyl-tRNA biosynthesis; selenocysteinyl-tRNA(Sec) biosynthesis; L-seryl-tRNA(Sec) from L-serine and tRNA(Sec): step 1/1. Its function is as follows. Catalyzes the attachment of serine to tRNA(Ser). Is also able to aminoacylate tRNA(Sec) with serine, to form the misacylated tRNA L-seryl-tRNA(Sec), which will be further converted into selenocysteinyl-tRNA(Sec). The sequence is that of Serine--tRNA ligase from Glaesserella parasuis serovar 5 (strain SH0165) (Haemophilus parasuis).